The chain runs to 132 residues: Histone H2A.1 (132 aa).

S2 carries the N-acetylserine modification. Residues K5 and K8 each carry the N6-acetyllysine modification. An N6-succinyllysine mark is found at K14 and K22. Q106 carries the post-translational modification N5-methylglutamine. K120 carries the N6-malonyllysine; alternate modification. Residue K127 forms a Glycyl lysine isopeptide (Lys-Gly) (interchain with G-Cter in SUMO) linkage. S129 carries the post-translational modification Phosphoserine. The [ST]-Q motif motif lies at S129 to Q130.

Belongs to the histone H2A family. In terms of assembly, the nucleosome is a histone octamer containing two molecules each of H2A, H2B, H3 and H4 assembled in one H3-H4 heterotetramer and two H2A-H2B heterodimers. The octamer wraps approximately 147 bp of DNA. Phosphorylated to form H2AS128ph (gamma-H2A) in response to DNA double-strand breaks (DSBs) generated by exogenous genotoxic agents and by stalled replication forks. Phosphorylation is dependent on the DNA damage checkpoint kinases MEC1/ATR and TEL1/ATM, spreads on either side of a detected DSB site and may mark the surrounding chromatin for recruitment of proteins required for DNA damage signaling and repair. Gamma-H2A interacts with ARP4, a shared component of the NuA4 histone acetyltransferase complex and the INO80 and SWR1 chromatin remodeling complexes, and serves to recruit first NuA4, mediating histone H4 acetylation, and subsequently the INO80/SWR1 complexes, facilitating DNA resection, to DSB sites. Gamma-H2A is required for sequestering cohesin around the break site, which is important for efficient post-replicative double-strand break repair by homologous recombination, holding the damaged chromatid close to its undamaged sister template. Gamma-H2A is removed from the DNA prior to the strand invasion-primer extension step of the repair process and subsequently dephosphorylated by PPH3, a component of the histone H2A phosphatase complex (HTP-C). Dephosphorylation is necessary for efficient recovery from the DNA damage checkpoint. In terms of processing, N-acetylated by NAT4. Post-translationally, acetylated by ESA1, a component of the NuA4 histone acetyltransferase (HAT) complex, to form H2AK4ac and H2AK7ac. Glutamine methylation at Gln-106 (H2AQ105me) by NOP1 is specifically dedicated to polymerase I. It is present at 35S ribosomal DNA locus and impairs binding of the FACT complex. In terms of processing, sumoylated to from H2AK126su. May lead to transcriptional repression.

The protein localises to the nucleus. It is found in the chromosome. In terms of biological role, core component of nucleosome which plays a central role in DNA double strand break (DSB) repair. Nucleosomes wrap and compact DNA into chromatin, limiting DNA accessibility to the cellular machineries which require DNA as a template. Histones thereby play a central role in transcription regulation, DNA repair, DNA replication and chromosomal stability. DNA accessibility is regulated via a complex set of post-translational modifications of histones, also called histone code, and nucleosome remodeling. This is Histone H2A.1 (HTA1) from Saccharomyces cerevisiae (strain ATCC 204508 / S288c) (Baker's yeast).